The chain runs to 122 residues: MVLGFLVRGGLVAATVYYTQKVGIWGDSDQTDKLYNDIKSELRPHVQKLEKQLPFEVPQLPKTGEMRFLAKHYYNEGVKNTFRFIHMLPCYAGRGLKKVKDTFQDFAQSPAIAGGAESSPPK.

The helical transmembrane segment at 9-25 (GGLVAATVYYTQKVGIW) threads the bilayer.

Belongs to the MICOS complex subunit Mic13 family. In terms of assembly, component of the mitochondrial contact site and cristae organizing system (MICOS) complex.

Its subcellular location is the mitochondrion inner membrane. In terms of biological role, component of the MICOS complex, a large protein complex of the mitochondrial inner membrane that plays crucial roles in the maintenance of crista junctions, inner membrane architecture, and formation of contact sites to the outer membrane. The polypeptide is MICOS complex subunit MIC13 homolog QIL1 (Drosophila melanogaster (Fruit fly)).